We begin with the raw amino-acid sequence, 580 residues long: Putative monoterpene synthase 8 (580 aa).

The transit peptide at 1-44 (MACTSNLSSLSKSWAVLDVPRGAPKATGLWLKRQFIFKTSRICM) directs the protein to the chloroplast. Mg(2+) contacts are provided by D333, D337, D478, T482, and E486. Residues 333–337 (DDIFD) carry the DDXXD motif motif.

The protein belongs to the terpene synthase family. Tpsg subfamily. As to quaternary structure, monomer. The cofactor is Mg(2+). It depends on Mn(2+) as a cofactor. Confined to flowers.

The protein localises to the plastid. It localises to the chloroplast. The protein operates within secondary metabolite biosynthesis; terpenoid biosynthesis. Its function is as follows. Monoterpene synthase (mono-TPS) involved in the biosynthesis of monoterpenes natural products, constituent of coffee beverage aroma. This Coffea arabica (Arabian coffee) protein is Putative monoterpene synthase 8.